The primary structure comprises 147 residues: MFNRIMVPVDGSKGAVKALEKGVGLQQLTGAELYILCVFKHHSLLEASLSMVRPEQLDIPDDALKDYATEIAVQAKTRATELGVPADKVRAFVKGGRPSRTIVRFARKRECDLVVIGAQGTNGDKSLLLGSVAQRVAGSAHCPVLVV.

ATP is bound by residues 8–10 (PVD), V38, 117–122 (GAQGTN), and 131–133 (SVA).

The protein belongs to the universal stress protein A family. As to quaternary structure, homodimer or homotetramer; in equilibrium. The dimer/tetramer ratio is ATP-dependent. ATP stabilizes dimer-dimer complexes, with one ATP molecule bound to each monomer.

It localises to the cytoplasm. Its function is as follows. ATP-binding protein that negatively regulates activity of the tripartite ATP-independent periplasmic (TRAP) ectoine transport system TeaABC. May regulate uptake according to the ATP status of the cell. The chain is TRAP-T-associated universal stress protein TeaD (teaD) from Halomonas elongata (strain ATCC 33173 / DSM 2581 / NBRC 15536 / NCIMB 2198 / 1H9).